The primary structure comprises 283 residues: Pantothenate synthetase (283 aa).

30 to 37 (MGNLHDGH) serves as a coordination point for ATP. H37 acts as the Proton donor in catalysis. Q61 serves as a coordination point for (R)-pantoate. Q61 serves as a coordination point for beta-alanine. Residue 149-152 (GEKD) participates in ATP binding. Residue Q155 coordinates (R)-pantoate. Residue 186 to 189 (LSSR) coordinates ATP.

Belongs to the pantothenate synthetase family. In terms of assembly, homodimer.

It is found in the cytoplasm. It catalyses the reaction (R)-pantoate + beta-alanine + ATP = (R)-pantothenate + AMP + diphosphate + H(+). Its pathway is cofactor biosynthesis; (R)-pantothenate biosynthesis; (R)-pantothenate from (R)-pantoate and beta-alanine: step 1/1. Catalyzes the condensation of pantoate with beta-alanine in an ATP-dependent reaction via a pantoyl-adenylate intermediate. This Shigella dysenteriae serotype 1 (strain Sd197) protein is Pantothenate synthetase.